The primary structure comprises 21 residues: GFMKYIGPLIPHAVKAISDLI.

Ile-21 is subject to Isoleucine amide.

In terms of tissue distribution, expressed by the skin dorsal glands.

The protein resides in the secreted. In terms of biological role, shows broad-spectrum antimicrobial activity against the Gram-negative bacterium E.coli (MIC=6.25 uM), K.pneumoniae (MIC=25 uM), E.cloacae (MIC=6.25 uM), P.aeruginosa (MIC=25 uM), the Gram-positive bacterium S.aureus (MIC=6.25 uM), S.epidermidis (MIC=6.25 uM), E.faecalis (MIC=12.5 uM), and the fungus C.albicans (MIC=100 uM). Has no antimicrobial effect against P.mirabilis (MIC&gt;100 uM). Has relatively high cytolytic and hemolytic activities. Its alpha-helix has considerable amphipathic character. In Kassina senegalensis (Senegal running frog), this protein is Kassinatuerin-1.